Consider the following 172-residue polypeptide: Ribosome maturation factor RimM (172 aa).

The PRC barrel domain maps to 96 to 168 (DGEFYYHEII…RVQVELMEGL (73 aa)).

This sequence belongs to the RimM family. As to quaternary structure, binds ribosomal protein uS19.

Its subcellular location is the cytoplasm. Its function is as follows. An accessory protein needed during the final step in the assembly of 30S ribosomal subunit, possibly for assembly of the head region. Essential for efficient processing of 16S rRNA. May be needed both before and after RbfA during the maturation of 16S rRNA. It has affinity for free ribosomal 30S subunits but not for 70S ribosomes. The chain is Ribosome maturation factor RimM from Streptococcus agalactiae serotype III (strain NEM316).